The chain runs to 299 residues: MSETTRLRIAIQKSGRLSKESQKLLKSCGVKFNVNEQRLIAHSDNMPIDLLRVRDDDIPGLVMDGVVDLGIIGENVLEEEQIERNSLGKPAECIKLRELDFGACRLSLAVPTEFNYQDASSLEGLRIATSYPNLLRRYMQEKGINYRDCMLKGSVEVAPRAGLSDGICDLVSTGATLEANGLYETEVIYRSMACIIQSTQSQPDDKQALINKILSRINGVVRAKESKYILLHAPTETLEQIVALLPGAENPTVLPLNDDTNRVAIHAVSTEDLFWDTMEQLTQLGASSILVMPIEKMMG.

Belongs to the ATP phosphoribosyltransferase family. Long subfamily. Mg(2+) serves as cofactor.

It is found in the cytoplasm. The enzyme catalyses 1-(5-phospho-beta-D-ribosyl)-ATP + diphosphate = 5-phospho-alpha-D-ribose 1-diphosphate + ATP. It participates in amino-acid biosynthesis; L-histidine biosynthesis; L-histidine from 5-phospho-alpha-D-ribose 1-diphosphate: step 1/9. Its activity is regulated as follows. Feedback inhibited by histidine. Catalyzes the condensation of ATP and 5-phosphoribose 1-diphosphate to form N'-(5'-phosphoribosyl)-ATP (PR-ATP). Has a crucial role in the pathway because the rate of histidine biosynthesis seems to be controlled primarily by regulation of HisG enzymatic activity. The chain is ATP phosphoribosyltransferase from Shewanella halifaxensis (strain HAW-EB4).